Reading from the N-terminus, the 198-residue chain is Urease accessory protein UreE (198 aa).

Residues 137–198 are disordered; that stretch reads ARGAYHSPGG…RGHDHDHKHD (62 aa). Over residues 149-198 the composition is skewed to basic and acidic residues; sequence HGHDHDHNHDHGHDHAHDHNHGHDHDHEHGYEHEHEHRHDRGHDHDHKHD.

The protein belongs to the UreE family.

It is found in the cytoplasm. Involved in urease metallocenter assembly. Binds nickel. Probably functions as a nickel donor during metallocenter assembly. The sequence is that of Urease accessory protein UreE from Rhizobium johnstonii (strain DSM 114642 / LMG 32736 / 3841) (Rhizobium leguminosarum bv. viciae).